A 517-amino-acid chain; its full sequence is MNVFFMFSLLFLAALESCADDRRNPLGECFREADYEEFVDIATNGLKQTSNPKRVVVVGAGMAGLSAAYVLAGAGHNVMLLEASERVGGRVNTYRNEQEGWYVNLGPMRLPERHRIVREYIKKFGLQLNQFFQEDEDAWYFIKNIRKKVREVKENPSIFPYPVKPSEKGKSAPQLYRDSLQKIIEEYGRSNCSYILNKYDTYSTKDYLIKEGNLSPGAVDMIGDLLNEGSSYYLSFIESLKSDDIFSYENRFDEIVGGFDLLPKAMYKAIEEKVHLNARVIQIQQNAEGVRVTYQTPAKNLSYVTADYVIVCSTSRAARRIYFEPPLPPEKAHALQSIHYRSATKIFLTCTKKFWEDDGIHGGKSITDRPSRLIHYPNHNFPNGIGVLVIYTIADDADFFLALDNKTIADIVIHDLSLIHQLPKEKIRDLCYVSMIKKWSLDKYSMGSITTFAPYQFQEYFETVAAPVGRIYFAGEYTARAHGWIDSTIKSGLKAARDVNRASQKPSRIQLSNDNEL.

Residues 1–18 (MNVFFMFSLLFLAALESC) form the signal peptide. Residues cysteine 29 and cysteine 192 are joined by a disulfide bond. FAD-binding positions include 62-63 (MA), 82-83 (EA), arginine 90, and 106-109 (GPMR). Arginine 109 contacts substrate. An N-linked (GlcNAc...) asparagine glycan is attached at asparagine 191. Valine 280 serves as a coordination point for FAD. Cysteine 350 and cysteine 431 form a disulfide bridge. Tyrosine 391 contributes to the substrate binding site. FAD contacts are provided by residues glutamate 476 and 483-488 (GWIDST). A substrate-binding site is contributed by 483 to 484 (GW).

The protein belongs to the flavin monoamine oxidase family. FIG1 subfamily. In terms of assembly, homodimer; non-covalently linked. Requires FAD as cofactor. N-glycosylated. In terms of tissue distribution, expressed by the venom gland.

It localises to the secreted. The catalysed reaction is an L-alpha-amino acid + O2 + H2O = a 2-oxocarboxylate + H2O2 + NH4(+). In terms of biological role, catalyzes an oxidative deamination of predominantly hydrophobic and aromatic L-amino acids, thus producing hydrogen peroxide that may contribute to the diverse toxic effects of this enzyme. Exhibits diverse biological activities, such as hemorrhage, hemolysis, edema, apoptosis of vascular endothelial cells or tumor cell lines, antibacterial and antiparasitic activities, as well as regulation of platelet aggregation. Its effect on platelets is controversial, since it either induces aggregation or inhibits agonist-induced aggregation. These different effects are probably due to different experimental conditions. The polypeptide is L-amino-acid oxidase (Demansia vestigiata (Lesser black whip snake)).